The following is a 329-amino-acid chain: Phosphate acyltransferase (329 aa).

It belongs to the PlsX family. As to quaternary structure, homodimer. Probably interacts with PlsY.

Its subcellular location is the cytoplasm. The enzyme catalyses a fatty acyl-[ACP] + phosphate = an acyl phosphate + holo-[ACP]. Its pathway is lipid metabolism; phospholipid metabolism. Its function is as follows. Catalyzes the reversible formation of acyl-phosphate (acyl-PO(4)) from acyl-[acyl-carrier-protein] (acyl-ACP). This enzyme utilizes acyl-ACP as fatty acyl donor, but not acyl-CoA. In Sulfurovum sp. (strain NBC37-1), this protein is Phosphate acyltransferase.